A 444-amino-acid chain; its full sequence is Glutamate--methylamine ligase (444 aa).

A GS beta-grasp domain is found at 14–97; sequence HHVKYVLAQF…LVCDGHVNGK (84 aa). The 342-residue stretch at 103-444 folds into the GS catalytic domain; sequence TRVVLKQQIA…WEINRYVQFY (342 aa).

Belongs to the glutamine synthetase family. Type 3 subfamily. Mg(2+) is required as a cofactor.

The catalysed reaction is methylamine + L-glutamate + ATP = N(5)-methyl-L-glutamine + ADP + phosphate + H(+). It carries out the reaction ethylamine + L-glutamate + ATP = N(5)-ethyl-L-glutamine + ADP + phosphate + H(+). With respect to regulation, formation of theanine is repressed by a high concentration of glutamic acid. Catalyzes the formation of N(5)-methyl-L-glutamine from glutamate and methylamine. In vitro, can also use ethylamine, hydroxylamine and ammonia, with 75%, 40% and 1% activity compared to methylamine, respectively. The sequence is that of Glutamate--methylamine ligase from Methylovorus mays.